A 145-amino-acid chain; its full sequence is Large ribosomal subunit protein uL16 (145 aa).

This sequence belongs to the universal ribosomal protein uL16 family. Part of the 50S ribosomal subunit.

Functionally, binds 23S rRNA and is also seen to make contacts with the A and possibly P site tRNAs. The protein is Large ribosomal subunit protein uL16 of Lactobacillus johnsonii (strain CNCM I-12250 / La1 / NCC 533).